Consider the following 123-residue polypeptide: Small ribosomal subunit protein uS12 (123 aa).

Residues methionine 1–arginine 22 are disordered. Aspartate 89 bears the 3-methylthioaspartic acid mark. The segment at alanine 101–lysine 123 is disordered. Residues lysine 111 to lysine 123 show a composition bias toward basic residues.

This sequence belongs to the universal ribosomal protein uS12 family. Part of the 30S ribosomal subunit. Contacts proteins S8 and S17. May interact with IF1 in the 30S initiation complex.

Functionally, with S4 and S5 plays an important role in translational accuracy. Interacts with and stabilizes bases of the 16S rRNA that are involved in tRNA selection in the A site and with the mRNA backbone. Located at the interface of the 30S and 50S subunits, it traverses the body of the 30S subunit contacting proteins on the other side and probably holding the rRNA structure together. The combined cluster of proteins S8, S12 and S17 appears to hold together the shoulder and platform of the 30S subunit. The sequence is that of Small ribosomal subunit protein uS12 from Teredinibacter turnerae (strain ATCC 39867 / T7901).